The sequence spans 609 residues: Tyrosine-protein kinase transforming protein Fes (609 aa).

Disordered regions lie at residues 1 to 20 and 152 to 208; these read AARADGTMGFSSELCSPQGH and RDSA…GGRT. Positions 8–174 constitute an F-BAR; degenerate domain; the sequence is MGFSSELCSP…SKDKDRDKAK (167 aa). Basic and acidic residues-rich tracts occupy residues 160–175 and 190–206; these read KYQEASKDKDRDKAKL and QDDRHSTSSSEQEREGG. Residues 247-336 form the SH2 domain; the sequence is WYHGALPRAE…KSGIVLNRAV (90 aa). In terms of domain architecture, Protein kinase spans 348–609; sequence LVLGEQIGRG…ELQSIRKRHR (262 aa). ATP is bound by residues 354-362 and Lys377; that span reads IGRGNFGEV. The active-site Proton acceptor is Asp470. Tyr500 carries the post-translational modification Phosphotyrosine; by autocatalysis.

The protein belongs to the protein kinase superfamily. Tyr protein kinase family. Fes/fps subfamily.

The enzyme catalyses L-tyrosyl-[protein] + ATP = O-phospho-L-tyrosyl-[protein] + ADP + H(+). In Felidae (cat family), this protein is Tyrosine-protein kinase transforming protein Fes (V-FES).